The sequence spans 316 residues: MSHTRAVVLAVACLCLILVQVEGTWNALDPEQMRFIHSRCFEDNLPAGPKRALYASKWIKWELEPNDETTHCFAKCVLEGIQLYDSKSKKFRSKRITIQHEAYKTFTGANDDEVAKYKQAVAALRVGSGSCSDVFNTYLPVHKQFHDVSQLVYLSVSAVAAKIYEADPNVKRKGESFAEYCAKRAWDEKTKGDACKARKYELTGSNELKAAIDCIFRGFRYINENGFNPDEIVRDFKLINKPELEPQVRSVLSKCAGEKAYEYYSCLLQSNVKEDFKHAFDFRELRSVDYSYLVKGNVYDPAKLKEEMAKADAKVC.

An N-terminal signal peptide occupies residues 1 to 23 (MSHTRAVVLAVACLCLILVQVEG). 4 cysteine pairs are disulfide-bonded: Cys40–Cys76, Cys72–Cys131, Cys181–Cys214, and Cys255–Cys266.

It belongs to the PBP/GOBP family.

The protein localises to the secreted. Modulates blood feeding of female mosquitoes on vertebrate species by binding and sequestering different mediators involved in the host response, such as biogenic amines and eicosanoids. Binds serotonin, tryptamine, histamine, leukotriene C4, leukotriene D4 and leukotriene E4. Does not bind octopamine, dopamine, noradrenaline, adrenaline and prostaglandin PGF2alpha. This is Long form salivary protein D7L1 from Anopheles atroparvus (European mosquito).